A 273-amino-acid chain; its full sequence is Mitochondrial distribution and morphology protein 12 (273 aa).

In terms of domain architecture, SMP-LTD spans 1 to 260 (MSFDINWEQL…WPSWINFDFY (260 aa)). The segment at 76-98 (MSAEEETEGSDDEGYGGDRVRNR) is disordered. Acidic residues predominate over residues 78–90 (AEEETEGSDDEGY).

It belongs to the MDM12 family. Component of the ER-mitochondria encounter structure (ERMES) or MDM complex, composed of MMM1, MDM10, MDM12 and MDM34. An MMM1 homodimer associates with one molecule of MDM12 on each side in a pairwise head-to-tail manner, and the SMP-LTD domains of MMM1 and MDM12 generate a continuous hydrophobic tunnel for phospholipid trafficking.

It is found in the mitochondrion outer membrane. Its subcellular location is the endoplasmic reticulum membrane. Component of the ERMES/MDM complex, which serves as a molecular tether to connect the endoplasmic reticulum (ER) and mitochondria. Components of this complex are involved in the control of mitochondrial shape and protein biogenesis, and function in nonvesicular lipid trafficking between the ER and mitochondria. MDM12 is required for the interaction of the ER-resident membrane protein MMM1 and the outer mitochondrial membrane-resident beta-barrel protein MDM10. The MDM12-MMM1 subcomplex functions in the major beta-barrel assembly pathway that is responsible for biogenesis of all mitochondrial outer membrane beta-barrel proteins, and acts in a late step after the SAM complex. The MDM10-MDM12-MMM1 subcomplex further acts in the TOM40-specific pathway after the action of the MDM12-MMM1 complex. Essential for establishing and maintaining the structure of mitochondria and maintenance of mtDNA nucleoids. The sequence is that of Mitochondrial distribution and morphology protein 12 from Vanderwaltozyma polyspora (strain ATCC 22028 / DSM 70294 / BCRC 21397 / CBS 2163 / NBRC 10782 / NRRL Y-8283 / UCD 57-17) (Kluyveromyces polysporus).